A 73-amino-acid chain; its full sequence is NAD(P)H-quinone oxidoreductase subunit L (73 aa).

The next 2 helical transmembrane spans lie at L7–F27 and V44–M64.

It belongs to the complex I NdhL subunit family. NDH-1 can be composed of about 15 different subunits; different subcomplexes with different compositions have been identified which probably have different functions.

The protein resides in the cellular thylakoid membrane. It carries out the reaction a plastoquinone + NADH + (n+1) H(+)(in) = a plastoquinol + NAD(+) + n H(+)(out). The catalysed reaction is a plastoquinone + NADPH + (n+1) H(+)(in) = a plastoquinol + NADP(+) + n H(+)(out). Functionally, NDH-1 shuttles electrons from an unknown electron donor, via FMN and iron-sulfur (Fe-S) centers, to quinones in the respiratory and/or the photosynthetic chain. The immediate electron acceptor for the enzyme in this species is believed to be plastoquinone. Couples the redox reaction to proton translocation, and thus conserves the redox energy in a proton gradient. Cyanobacterial NDH-1 also plays a role in inorganic carbon-concentration. This chain is NAD(P)H-quinone oxidoreductase subunit L, found in Synechococcus sp. (strain JA-3-3Ab) (Cyanobacteria bacterium Yellowstone A-Prime).